The primary structure comprises 464 residues: Argininosuccinate lyase (464 aa).

It belongs to the lyase 1 family. Argininosuccinate lyase subfamily.

Its subcellular location is the cytoplasm. It carries out the reaction 2-(N(omega)-L-arginino)succinate = fumarate + L-arginine. It functions in the pathway amino-acid biosynthesis; L-arginine biosynthesis; L-arginine from L-ornithine and carbamoyl phosphate: step 3/3. This Alcanivorax borkumensis (strain ATCC 700651 / DSM 11573 / NCIMB 13689 / SK2) protein is Argininosuccinate lyase.